The sequence spans 1043 residues: NACHT, LRR and PYD domains-containing protein 13 (1043 aa).

The Pyrin domain occupies 1-107; sequence MNFSVITCPN…CEKVRAEMKE (107 aa). An NACHT domain is found at 229 to 558; the sequence is QTIVLVGRAG…VLEEPREFPP (330 aa). 235-242 is a binding site for ATP; sequence GRAGVGKT. LRR repeat units follow at residues 725–749, 781–804, 837–864, 894–917, 923–946, 951–978, and 1007–1030; these read NENL…LCLA, NSKL…ILKA, IQHV…ALTH, NRSL…FLCE, DGNL…ELAN, NHNV…ALKP, and SKSL…MLCK.

It belongs to the NLRP family.

Involved in inflammation. This chain is NACHT, LRR and PYD domains-containing protein 13 (NLRP13), found in Homo sapiens (Human).